The chain runs to 320 residues: 1,5-anhydro-D-fructose reductase (320 aa).

Residue Tyr40 is the Proton donor of the active site. His102 is a substrate binding site. Residues Gln194 and 265–277 each bind NADP(+); that span reads IPGSITPSHIKEN.

It belongs to the aldo/keto reductase family. Monomer.

The protein localises to the cytoplasm. The enzyme catalyses 1,5-anhydro-D-glucitol + NADP(+) = 1,5-anhydro-D-fructose + NADPH + H(+). Inhibited by p-chloromercuribenzoic acid and alkyliodines. In terms of biological role, catalyzes the NADPH-dependent reduction of 1,5-anhydro-D-fructose (AF) to 1,5-anhydro-D-glucitol. The chain is 1,5-anhydro-D-fructose reductase (AKR1E2) from Macaca fascicularis (Crab-eating macaque).